A 93-amino-acid polypeptide reads, in one-letter code: Large ribosomal subunit protein bL31B (93 aa).

Belongs to the bacterial ribosomal protein bL31 family. Type B subfamily. In terms of assembly, part of the 50S ribosomal subunit.

This Psychrobacter cryohalolentis (strain ATCC BAA-1226 / DSM 17306 / VKM B-2378 / K5) protein is Large ribosomal subunit protein bL31B.